The sequence spans 1142 residues: E3 ubiquitin-protein ligase TRIM33 (1142 aa).

Gly residues predominate over residues 1–18; the sequence is MAENKGGGEAESGGGGSG. A disordered region spans residues 1-132; that stretch reads MAENKGGGEA…PGSSSGPPLG (132 aa). The interval 1 to 163 is necessary for E3 ubiquitin-protein ligase activity and repression of SMAD4 signaling and transcriptional repression; the sequence is MAENKGGGEA…AEPKLLPCLH (163 aa). Residues 19–42 show a composition bias toward low complexity; the sequence is SAPVTAGAAGPTAQEAEPPLAAVL. Residues 52 to 64 are compositionally biased toward gly residues; the sequence is RAGAEGGAAGPDD. The segment covering 65-99 has biased composition (low complexity); it reads GGVAAASSSSAPAASVPAASVGSAVPGGAASTPAP. Positions 100–122 are enriched in pro residues; it reads AAAPAPAPAPAPAPAPAPAPAPA. The segment at 141–201 adopts an RING-type zinc-finger fold; the sequence is CAVCQQSLQS…VGVIRCPVCR (61 aa). B box-type zinc fingers lie at residues 228–275 and 287–328; these read KSEQ…IRKK and QRPV…YQFL. 8 residues coordinate Zn(2+): cysteine 233, cysteine 236, cysteine 257, histidine 261, cysteine 292, histidine 295, cysteine 315, and histidine 320. The necessary for oligomerization stretch occupies residues 315–417; the sequence is CQLLEHKEHR…QMKLLQQQND (103 aa). Positions 315–417 form a coiled coil; the sequence is CQLLEHKEHR…QMKLLQQQND (103 aa). Residues lysine 345, lysine 350, lysine 497, and lysine 520 each participate in a glycyl lysine isopeptide (Lys-Gly) (interchain with G-Cter in SUMO2) cross-link. Position 531 is an asymmetric dimethylarginine; alternate (arginine 531). Omega-N-methylarginine; alternate is present on arginine 531. Lysine 543 is covalently cross-linked (Glycyl lysine isopeptide (Lys-Gly) (interchain with G-Cter in SUMO2)). Position 551 is an omega-N-methylarginine (arginine 551). Arginine 593 bears the Asymmetric dimethylarginine mark. An Asymmetric dimethylarginine; alternate modification is found at arginine 607. Arginine 607 carries the omega-N-methylarginine; alternate modification. Asymmetric dimethylarginine occurs at positions 614 and 620. 3 disordered regions span residues 657 to 676, 688 to 707, and 718 to 834; these read PTSPTTATMANANRGPTSPS, NPENLPSLPDIPPIQLEDAG, and YISG…PPLS. A compositionally biased stretch (low complexity) spans 738–774; sequence PSALSPGSSGLSNSHTPVRPPSTSSTGSRGSCGSSGR. 2 stretches are compositionally biased toward basic and acidic residues: residues 775–794 and 808–817; these read TAEKSAHSFKSDQVKVKQEP and KQEKTEDGRR. N6-acetyllysine; alternate occurs at positions 778 and 784. Residues lysine 778 and lysine 784 each participate in a glycyl lysine isopeptide (Lys-Gly) (interchain with G-Cter in SUMO2); alternate cross-link. Lysine 789 is covalently cross-linked (Glycyl lysine isopeptide (Lys-Gly) (interchain with G-Cter in SUMO2)). Glycyl lysine isopeptide (Lys-Gly) (interchain with G-Cter in SUMO2); alternate cross-links involve residues lysine 791 and lysine 808. Residues lysine 791 and lysine 808 each participate in a glycyl lysine isopeptide (Lys-Gly) (interchain with G-Cter in SUMO1); alternate cross-link. Residue lysine 808 is modified to N6-acetyllysine; alternate. Lysine 811 participates in a covalent cross-link: Glycyl lysine isopeptide (Lys-Gly) (interchain with G-Cter in SUMO2). At serine 818 the chain carries Phosphoserine. Low complexity predominate over residues 822–834; that stretch reads LSSPESSLTPPLS. Residue threonine 830 is modified to Phosphothreonine. A Glycyl lysine isopeptide (Lys-Gly) (interchain with G-Cter in SUMO2) cross-link involves residue lysine 876. Position 877 is a phosphoserine (serine 877). Residues 902–949 form a PHD-type zinc finger; it reads EDWCAVCQNGGDLLCCEKCPKVFHLTCHVPTLLSFPSGDWICTFCRDI. Lysine 966 carries the post-translational modification N6-acetyllysine. Lysine 968 bears the N6-acetyllysine; alternate mark. Lysine 968 participates in a covalent cross-link: Glycyl lysine isopeptide (Lys-Gly) (interchain with G-Cter in SUMO2); alternate. Residues 972-1095 enclose the Bromo domain; the sequence is GLSPVDQRKC…LYFEDKLSEI (124 aa). Residues lysine 1022 and lysine 1058 each participate in a glycyl lysine isopeptide (Lys-Gly) (interchain with G-Cter in SUMO2) cross-link. A Phosphothreonine modification is found at threonine 1066. Lysine 1072 is covalently cross-linked (Glycyl lysine isopeptide (Lys-Gly) (interchain with G-Cter in SUMO2)). The segment at 1103–1142 is disordered; the sequence is PLPEFEQDEDDGEVTEDSDEDFIQPRRKRLKSDERPVHIK. Residues 1107-1124 are compositionally biased toward acidic residues; the sequence is FEQDEDDGEVTEDSDEDF. Phosphothreonine is present on threonine 1117. Serine 1120 is subject to Phosphoserine. Lysine 1133 is covalently cross-linked (Glycyl lysine isopeptide (Lys-Gly) (interchain with G-Cter in SUMO2)). Positions 1133-1142 are enriched in basic and acidic residues; that stretch reads KSDERPVHIK. The residue at position 1134 (serine 1134) is a Phosphoserine.

The protein belongs to the TRIM/RBCC family. Homooligomer and heterooligomer with TRIM24 and TRIM28 family members. Interacts with SMAD4 in unstimulated cells. Found in a complex with SMAD2 and SMAD3 upon addition of TGF-beta. Interacts with SMAD2 and SMAD3. Interacts with SMAD4 under basal and induced conditions and, upon TGF-beta signaling, with activated SMAD2. Forms a ternary complex with SMAD4 and SMAD2 upon TGF-beta signaling. Post-translationally, sumoylated with SUMO1. Ubiquitous with high level in testis.

Its subcellular location is the nucleus. It carries out the reaction S-ubiquitinyl-[E2 ubiquitin-conjugating enzyme]-L-cysteine + [acceptor protein]-L-lysine = [E2 ubiquitin-conjugating enzyme]-L-cysteine + N(6)-ubiquitinyl-[acceptor protein]-L-lysine.. The protein operates within protein modification; protein ubiquitination. Functionally, acts as an E3 ubiquitin-protein ligase. Promotes SMAD4 ubiquitination, nuclear exclusion and degradation via the ubiquitin proteasome pathway. May act as a transcriptional repressor. Inhibits the transcriptional response to TGF-beta/BMP signaling cascade. Plays a role in the control of cell proliferation. Its association with SMAD2 and SMAD3 stimulates erythroid differentiation of hematopoietic stem/progenitor. Monoubiquitinates SMAD4 and acts as an inhibitor of SMAD4-dependent TGF-beta/BMP signaling cascade (Monoubiquitination of SMAD4 hampers its ability to form a stable complex with activated SMAD2/3 resulting in inhibition of TGF-beta/BMP signaling cascade). This Mus musculus (Mouse) protein is E3 ubiquitin-protein ligase TRIM33 (Trim33).